Reading from the N-terminus, the 77-residue chain is Dermatoxin-A1 (77 aa).

The first 22 residues, 1–22 (MAFLKKSLFLVLFLGLVPLFLC), serve as a signal peptide directing secretion. Residues 23–42 (ENEKREGENEKEENDDQSEE) constitute a propeptide that is removed on maturation. Gln76 carries the glutamine amide modification.

Belongs to the frog skin active peptide (FSAP) family. Dermatoxin subfamily. Expressed by the skin glands.

The protein localises to the secreted. Possesses a potent antimicrobial activity against Gram-positive and Gram-negative bacteria. Probably acts by disturbing membrane functions with its amphipathic structure. The polypeptide is Dermatoxin-A1 (Agalychnis annae (Blue-sided leaf frog)).